Reading from the N-terminus, the 142-residue chain is Large ribosomal subunit protein uL11 (142 aa).

It belongs to the universal ribosomal protein uL11 family. Part of the ribosomal stalk of the 50S ribosomal subunit. Interacts with L10 and the large rRNA to form the base of the stalk. L10 forms an elongated spine to which L12 dimers bind in a sequential fashion forming a multimeric L10(L12)X complex. In terms of processing, one or more lysine residues are methylated.

Forms part of the ribosomal stalk which helps the ribosome interact with GTP-bound translation factors. The sequence is that of Large ribosomal subunit protein uL11 from Ruthia magnifica subsp. Calyptogena magnifica.